We begin with the raw amino-acid sequence, 978 residues long: Xylanolytic transcriptional activator xlnR (978 aa).

Disordered regions lie at residues 1-39 and 53-116; these read MSTTSVQHFAPSYPPFSSGLSSNRMAQSQTPGLDTLAEG and AAAG…RDPL. Residues 18–32 show a composition bias toward polar residues; that stretch reads SGLSSNRMAQSQTPG. Low complexity predominate over residues 53 to 69; the sequence is AAAGDTTATAASGPSDP. Basic and acidic residues predominate over residues 71 to 82; it reads SKSKDPYDFDHH. Residues 83–93 show a composition bias toward basic residues; the sequence is NHNHHNHHNNN. Positions 94-103 are enriched in low complexity; the sequence is HHPNSNSNNS. Residues 140-166 constitute a DNA-binding region (zn(2)-C6 fungal-type); sequence CDQCNQLRTRCDGQNPCAHCIEFGLTC. Disordered regions lie at residues 179-223, 238-293, and 588-629; these read SKKD…ELNG, SAQP…PIPV, and ELPP…PGNT. The segment covering 184 to 193 has biased composition (low complexity); it reads AAAAAAATAT. Over residues 214–223 the composition is skewed to basic and acidic residues; that stretch reads PPDRRQELNG.

It belongs to the xlnR/xlr1 family.

The protein localises to the nucleus. Its function is as follows. Transcriptional activator of the xylanolytic system. Involved in the regulation of extracellular cellulolytic and xylanolytic genes and in the regulation of the intracellular activities of D-xylose catabolic genes in the pentose catabolic pathway (PCP) in response to the presence of D-xylose. This is Xylanolytic transcriptional activator xlnR (xlnR) from Aspergillus clavatus (strain ATCC 1007 / CBS 513.65 / DSM 816 / NCTC 3887 / NRRL 1 / QM 1276 / 107).